Consider the following 152-residue polypeptide: Superoxide dismutase [Cu-Zn] (152 aa).

Cu cation is bound by residues histidine 45, histidine 47, and histidine 62. The tract at residues 61 to 87 is disordered; that stretch reads PHFNPAGKEHGAPEDENRHAGDLGNAT. Residues histidine 62, histidine 70, histidine 79, and aspartate 82 each contribute to the Zn(2+) site. A compositionally biased stretch (basic and acidic residues) spans 67–81; sequence GKEHGAPEDENRHAG. Histidine 119 lines the Cu cation pocket.

Belongs to the Cu-Zn superoxide dismutase family. Homodimer. The cofactor is Cu cation. It depends on Zn(2+) as a cofactor.

Its subcellular location is the cytoplasm. The enzyme catalyses 2 superoxide + 2 H(+) = H2O2 + O2. In terms of biological role, destroys radicals which are normally produced within the cells and which are toxic to biological systems. This is Superoxide dismutase [Cu-Zn] from Zingiber officinale (Ginger).